The following is a 72-amino-acid chain: U-actitoxin-Avd3r (72 aa).

Positions 1–6 (ADVSYG) are cleaved as a signal peptide. The region spanning 11–61 (CLLPMDVGRCRAKFPRYYYNSSSRRCEKFNYGGCRGNANNFHTLEECEKVC) is the BPTI/Kunitz inhibitor domain. 3 disulfides stabilise this stretch: C11–C61, C20–C44, and C36–C57. A propeptide spanning residues 66–72 (RDSPKEN) is cleaved from the precursor.

This sequence belongs to the venom Kunitz-type family. Sea anemone type 2 potassium channel toxin subfamily.

The protein localises to the secreted. Its subcellular location is the nematocyst. Functionally, serine protease inhibitor that inhibits both tissue and plasma kallikreins. Has hemolytic activity. Inhibits voltage-gated potassium channels (Kv). The protein is U-actitoxin-Avd3r of Anemonia viridis (Snakelocks anemone).